Consider the following 419-residue polypeptide: Protein translocase subunit SecY (419 aa).

The next 10 helical transmembrane spans lie at 19 to 39 (IMILIFARLGNYIPIPGITEV), 64 to 84 (VISILTLGLGPFFSASLAVQF), 113 to 133 (ILTVLFCIIESFFLSNSLRSF), 143 to 163 (FVVAAAVTTGSLVLVWLSEVI), 167 to 189 (GIGNGSSLLILIGNLSRFRFLIN), 202 to 222 (SNLYIIYIIITLVSMLIFSTL), 255 to 275 (FGQAGVVPIIFSSSILLFLTT), 299 to 319 (IFYFFTFLVLIIFFSFFYTLI), 359 to 379 (FVGSILLSALILIPSILAAAL), and 380 to 400 (GVHPLSISGITSLILSFSIIN).

It belongs to the SecY/SEC61-alpha family. In terms of assembly, component of the plastid Sec protein translocase complex, which is composed of at least SecY and SecE.

It localises to the plastid. It is found in the chloroplast thylakoid membrane. Its function is as follows. The central subunit of the protein translocation channel SecYE. Consists of two halves formed by TMs 1-5 and 6-10. These two domains form a lateral gate at the front which open onto the bilayer between TMs 2 and 7, and are clamped together by SecE at the back. The channel is closed by both a pore ring composed of hydrophobic SecY resides and a short helix (helix 2A) on the extracellular side of the membrane which forms a plug. This Diacronema lutheri (Unicellular marine alga) protein is Protein translocase subunit SecY.